The sequence spans 209 residues: Ribonuclease HII (209 aa).

The region spanning 25–209 is the RNase H type-2 domain; it reads RRIAGIDEAG…ATFRGVREYL (185 aa). Asp-31, Glu-32, and Asp-123 together coordinate a divalent metal cation.

The protein belongs to the RNase HII family. Mn(2+) is required as a cofactor. Mg(2+) serves as cofactor.

The protein localises to the cytoplasm. It carries out the reaction Endonucleolytic cleavage to 5'-phosphomonoester.. Functionally, endonuclease that specifically degrades the RNA of RNA-DNA hybrids. The sequence is that of Ribonuclease HII from Syntrophotalea carbinolica (strain DSM 2380 / NBRC 103641 / GraBd1) (Pelobacter carbinolicus).